The primary structure comprises 380 residues: Guanine nucleotide-binding protein alpha-1 subunit (380 aa).

The disordered stretch occupies residues 1–25 (MGSSCSRSHSLSEAETTKNAKSADI). Gly-2 carries the N-myristoyl glycine lipid modification. Cys-5 carries S-palmitoyl cysteine lipidation. Positions 10-25 (SLSEAETTKNAKSADI) are enriched in basic and acidic residues. The 343-residue stretch at 38–380 (HIHKLLLLGA…ESMRRSREGT (343 aa)) folds into the G-alpha domain. A G1 motif region spans residues 41–54 (KLLLLGAGESGKST). Positions 49, 50, 51, 52, 53, 54, 163, 188, 189, 194, 222, 288, 289, 291, and 356 each coordinate GTP. Position 53 (Ser-53) interacts with Mg(2+). Residues 186–194 (DVLYARVRT) form a G2 motif region. Mg(2+) is bound at residue Thr-194. Positions 215–224 (YRLYDVGGQR) are G3 motif. The interval 284 to 291 (ILFLNKFD) is G4 motif. Residues 354–359 (TTALDQ) form a G5 motif region.

The protein belongs to the G-alpha family. As to quaternary structure, g proteins are composed of 3 units; alpha, beta and gamma. The alpha chain contains the guanine nucleotide binding site. Interacts with COLD1. Requires Mg(2+) as cofactor.

It is found in the cell membrane. In terms of biological role, guanine nucleotide-binding proteins (G proteins) are involved as modulators or transducers in various transmembrane signaling systems. May function in a signal transduction pathway required for normal growth and development of internodes, leaves, panicles and seeds. Involved in gibberellin signal transduction. Involved in R gene-mediated disease resistance. Functions upstream of the small GTPase RAC1 in the early steps of signaling. Involved in brassinosteroid response. May not be a signaling molecule in BRI1-mediated perception or transduction. The sequence is that of Guanine nucleotide-binding protein alpha-1 subunit (GPA1) from Oryza sativa subsp. indica (Rice).